We begin with the raw amino-acid sequence, 364 residues long: Poly(3-hydroxyalkanoate) polymerase subunit PhaE (364 aa).

The tract at residues 322 to 364 (SGKTPTTALKAPAPATKATEKPATRATTRRKTAAKPTGGTADD) is disordered. The span at 324–338 (KTPTTALKAPAPATK) shows a compositional bias: low complexity.

It belongs to the PHA/PHB synthase family. Type III PhaE subfamily. In terms of assembly, forms a heterodimer with PhaC, which may multimerize in the presence of 3-hydroxybutyryl-CoA.

The protein resides in the cytoplasm. The protein operates within biopolymer metabolism; poly-(R)-3-hydroxybutanoate biosynthesis. Polymerizes D(-)-3-hydroxybutyryl-CoA to create polyhydroxybutyrate (PHB) which consists of thousands of hydroxybutyrate molecules linked end to end. This subunit has no catalytic activity but enhances the activity of PhaC, the catalytic subunit. The sequence is that of Poly(3-hydroxyalkanoate) polymerase subunit PhaE from Thiocystis violacea.